Consider the following 154-residue polypeptide: 6,7-dimethyl-8-ribityllumazine synthase (154 aa).

5-amino-6-(D-ribitylamino)uracil is bound by residues tryptophan 22, 56–58 (AWE), and 80–82 (CVV). 85–86 (DT) contributes to the (2S)-2-hydroxy-3-oxobutyl phosphate binding site. Histidine 88 functions as the Proton donor in the catalytic mechanism. Asparagine 113 contacts 5-amino-6-(D-ribitylamino)uracil. Residue arginine 127 coordinates (2S)-2-hydroxy-3-oxobutyl phosphate.

This sequence belongs to the DMRL synthase family. Forms an icosahedral capsid composed of 60 subunits, arranged as a dodecamer of pentamers.

The enzyme catalyses (2S)-2-hydroxy-3-oxobutyl phosphate + 5-amino-6-(D-ribitylamino)uracil = 6,7-dimethyl-8-(1-D-ribityl)lumazine + phosphate + 2 H2O + H(+). It functions in the pathway cofactor biosynthesis; riboflavin biosynthesis; riboflavin from 2-hydroxy-3-oxobutyl phosphate and 5-amino-6-(D-ribitylamino)uracil: step 1/2. In terms of biological role, catalyzes the formation of 6,7-dimethyl-8-ribityllumazine by condensation of 5-amino-6-(D-ribitylamino)uracil with 3,4-dihydroxy-2-butanone 4-phosphate. This is the penultimate step in the biosynthesis of riboflavin. In Xylella fastidiosa (strain M23), this protein is 6,7-dimethyl-8-ribityllumazine synthase.